The chain runs to 1512 residues: Mitogen-activated protein kinase kinase kinase 1 (1512 aa).

Residues 1-13 (MAAAAGNRASSSG) show a composition bias toward low complexity. 3 disordered regions span residues 1-37 (MAAA…SSAP), 67-181 (SVEL…DRPE), and 213-304 (VKPI…PEET). At Ala2 the chain carries N-acetylalanine. Residues Ser21 and Ser35 each carry the phosphoserine modification. Composition is skewed to low complexity over residues 81–99 (AASP…ADAA), 129–142 (AAPD…AAAE), and 150–160 (AAEPSPAAAPA). Phosphoserine occurs at positions 137 and 154. The span at 162–181 (REMENKETLKGLHKMDDRPE) shows a compositional bias: basic and acidic residues. The span at 250–260 (SPSPGNSPSGR) shows a compositional bias: low complexity. Ser275 bears the Phosphoserine mark. Position 285 is a phosphothreonine (Thr285). A phosphoserine mark is found at Ser292, Ser297, and Ser300. The SWIM-type zinc-finger motif lies at 338 to 366 (YRVFIGPQNCSCARGTFCIHLLFVMLRVF). A compositionally biased stretch (low complexity) spans 416–433 (SNSHTLSSSSTSTSSSEN). Residues 416–436 (SNSHTLSSSSTSTSSSENSIK) are disordered. The segment at 443 to 492 (CPICLLGMLDEESLTVCEDGCRNKLHHHCMSIWAEECRRNREPLICPLCR) adopts an RING-type zinc-finger fold. Residues Ser507 and Ser531 each carry the phosphoserine modification. 2 disordered regions span residues 511-532 (SPSS…AGSR) and 602-624 (STGN…GSSQ). A compositionally biased stretch (low complexity) spans 611–624 (GSSPSGGATSGSSQ). Ser923 bears the Phosphoserine mark. A disordered region spans residues 933–972 (SISVGPSSSTTTTTTTTEQPKPMVQTKGRPHSQCLNSSPL). Over residues 939 to 949 (SSSTTTTTTTT) the composition is skewed to low complexity. Ser1018 is subject to Phosphoserine. Residues 1032–1041 (NCPENKDSDK) are compositionally biased toward basic and acidic residues. Positions 1032 to 1087 (NCPENKDSDKLSPVFTQSRPLPSSNIHRPKPSRPTPGNTSKQGDPSKNSMTLDLNS) are disordered. Ser1043 bears the Phosphoserine mark. Composition is skewed to polar residues over residues 1045-1057 (VFTQ…SSNI) and 1066-1087 (TPGN…DLNS). Positions 1243-1508 (WLKGQQIGLG…SRELLKHPVF (266 aa)) constitute a Protein kinase domain. ATP is bound by residues 1249 to 1257 (IGLGAFSSC) and Lys1272. Catalysis depends on Asp1369, which acts as the Proton acceptor. Thr1400 and Thr1412 each carry phosphothreonine; by autocatalysis.

It belongs to the protein kinase superfamily. STE Ser/Thr protein kinase family. MAP kinase kinase kinase subfamily. As to quaternary structure, binds both upstream activators and downstream substrates in multimolecular complexes through its N-terminus. Oligomerizes after binding MAP2K4 or TRAF2. Interacts with AXIN1. Interacts (via the kinase catalytic domain) with STK38. Interacts with GRIPAP1. Mg(2+) is required as a cofactor. Autophosphorylated.

The catalysed reaction is L-seryl-[protein] + ATP = O-phospho-L-seryl-[protein] + ADP + H(+). The enzyme catalyses L-threonyl-[protein] + ATP = O-phospho-L-threonyl-[protein] + ADP + H(+). It carries out the reaction S-ubiquitinyl-[E2 ubiquitin-conjugating enzyme]-L-cysteine + [acceptor protein]-L-lysine = [E2 ubiquitin-conjugating enzyme]-L-cysteine + N(6)-ubiquitinyl-[acceptor protein]-L-lysine.. With respect to regulation, activated by autophosphorylation on Thr-1400 and Thr-1412 following oligomerization. Component of a protein kinase signal transduction cascade. Activates the ERK and JNK kinase pathways by phosphorylation of MAP2K1 and MAP2K4. May phosphorylate the MAPK8/JNK1 kinase. Activates CHUK and IKBKB, the central protein kinases of the NF-kappa-B pathway. This Homo sapiens (Human) protein is Mitogen-activated protein kinase kinase kinase 1 (MAP3K1).